The sequence spans 240 residues: uncharacterized protein (240 aa).

This is an uncharacterized protein from Thermotoga maritima (strain ATCC 43589 / DSM 3109 / JCM 10099 / NBRC 100826 / MSB8).